A 445-amino-acid chain; its full sequence is Zinc finger protein 296 (445 aa).

Residues 1 to 10 (MSRRKAGRVP) are compositionally biased toward basic residues. A disordered region spans residues 1–20 (MSRRKAGRVPRRVDPDTDTD). Lysine 31 is covalently cross-linked (Glycyl lysine isopeptide (Lys-Gly) (interchain with G-Cter in SUMO2)). Positions 62–88 (SRPLGAPSTCAPRMPLSSKSSDRQPWT) are disordered. C2H2-type zinc fingers lie at residues 138–161 (LSCL…QWDH), 212–234 (PTCD…MRSH), and 240–262 (YSCD…KKTH). A disordered region spans residues 256–359 (NRHKKTHRQL…TAPRKSHGPG (104 aa)). The segment covering 269-278 (SPSTSASSRG) has biased composition (polar residues). The segment covering 320 to 332 (PGSGAQGGPGFVG) has biased composition (gly residues). Residues 338–351 (KVERTDPVKIEKTA) show a composition bias toward basic and acidic residues. 3 C2H2-type zinc fingers span residues 360 to 382 (GKCE…RRSH), 388 to 410 (YTCD…RRTH), and 418 to 441 (VKCP…RQKH).

This sequence belongs to the krueppel C2H2-type zinc-finger protein family. Interacts with KLF4. As to expression, strongly expressed in testis and embryonic stem cells.

The protein resides in the nucleus. Its function is as follows. May be a transcriptional corepressor with KLF4. The chain is Zinc finger protein 296 from Mus musculus (Mouse).